The following is a 361-amino-acid chain: 24-methylenesterol C-methyltransferase 2 (361 aa).

The protein belongs to the class I-like SAM-binding methyltransferase superfamily. Erg6/SMT family.

It carries out the reaction 24-methylidenelophenol + S-adenosyl-L-methionine = (Z)-24-ethylidenelophenol + S-adenosyl-L-homocysteine + H(+). It participates in steroid biosynthesis; sterol biosynthesis. In terms of biological role, catalyzes the methyl transfer from S-adenosyl-methionine to the methylene group of 24-methylene lophenol to form 24-ethylidene lophenol. The polypeptide is 24-methylenesterol C-methyltransferase 2 (SMT2) (Arabidopsis thaliana (Mouse-ear cress)).